A 181-amino-acid chain; its full sequence is ATP-dependent protease subunit HslV (181 aa).

The active site involves Thr-7. Na(+)-binding residues include Ala-165, Cys-168, and Thr-171.

This sequence belongs to the peptidase T1B family. HslV subfamily. As to quaternary structure, a double ring-shaped homohexamer of HslV is capped on each side by a ring-shaped HslU homohexamer. The assembly of the HslU/HslV complex is dependent on binding of ATP.

The protein localises to the cytoplasm. The enzyme catalyses ATP-dependent cleavage of peptide bonds with broad specificity.. With respect to regulation, allosterically activated by HslU binding. In terms of biological role, protease subunit of a proteasome-like degradation complex believed to be a general protein degrading machinery. This Lysinibacillus sphaericus (strain C3-41) protein is ATP-dependent protease subunit HslV.